A 212-amino-acid polypeptide reads, in one-letter code: Outer surface protein C (212 aa).

Positions 1–18 are cleaved as a signal peptide; sequence MKKNTLSAILMTLFLFIS. Residue Cys19 is the site of N-palmitoyl cysteine attachment. Cys19 is lipidated: S-diacylglycerol cysteine.

Belongs to the OspC lipoprotein family. In terms of assembly, homodimer. Interacts with tick Ixodes ricinus salivary protein Iric-1. Binds human (host) plasminogen. In terms of processing, the N-terminus is blocked.

The protein resides in the cell outer membrane. It is found in the cell surface. Functionally, major immunodominant protein in mammalian hosts. Required for initial stages of mammalian infection. Inhibits macrophage-mediated phagocytosis of the bacteria. Binds human plasminogen; this probably confers an extracellular protease activity on the bacteria that allows it to traverse tissue. Unlike closely related strain B31, its interaction with Ixodes ricinus salivary protein Iric-1 does not protect against antibody-mediated destruction in vitro. This Borreliella afzelii (strain PKo) (Borrelia afzelii) protein is Outer surface protein C.